We begin with the raw amino-acid sequence, 427 residues long: Glutamate-1-semialdehyde 2,1-aminomutase (427 aa).

Lys265 carries the post-translational modification N6-(pyridoxal phosphate)lysine.

This sequence belongs to the class-III pyridoxal-phosphate-dependent aminotransferase family. HemL subfamily. In terms of assembly, homodimer. Pyridoxal 5'-phosphate is required as a cofactor.

It is found in the cytoplasm. It carries out the reaction (S)-4-amino-5-oxopentanoate = 5-aminolevulinate. Its pathway is porphyrin-containing compound metabolism; protoporphyrin-IX biosynthesis; 5-aminolevulinate from L-glutamyl-tRNA(Glu): step 2/2. The sequence is that of Glutamate-1-semialdehyde 2,1-aminomutase from Pseudomonas fluorescens (strain SBW25).